The sequence spans 342 residues: RNA 3'-terminal phosphate cyclase (342 aa).

ATP-binding positions include Gln103 and Tyr283–Gln287. Residue His308 is the Tele-AMP-histidine intermediate of the active site.

It belongs to the RNA 3'-terminal cyclase family. Type 1 subfamily.

The protein localises to the cytoplasm. It catalyses the reaction a 3'-end 3'-phospho-ribonucleotide-RNA + ATP = a 3'-end 2',3'-cyclophospho-ribonucleotide-RNA + AMP + diphosphate. Its function is as follows. Catalyzes the conversion of 3'-phosphate to a 2',3'-cyclic phosphodiester at the end of RNA. The mechanism of action of the enzyme occurs in 3 steps: (A) adenylation of the enzyme by ATP; (B) transfer of adenylate to an RNA-N3'P to produce RNA-N3'PP5'A; (C) and attack of the adjacent 2'-hydroxyl on the 3'-phosphorus in the diester linkage to produce the cyclic end product. The biological role of this enzyme is unknown but it is likely to function in some aspects of cellular RNA processing. This chain is RNA 3'-terminal phosphate cyclase, found in Shigella dysenteriae serotype 1 (strain Sd197).